Here is a 281-residue protein sequence, read N- to C-terminus: Phosphatidylserine decarboxylase proenzyme (281 aa).

Active-site charge relay system; for autoendoproteolytic cleavage activity residues include Asp-90, His-143, and Ser-248. The active-site Schiff-base intermediate with substrate; via pyruvic acid; for decarboxylase activity is the Ser-248. Ser-248 bears the Pyruvic acid (Ser); by autocatalysis mark.

This sequence belongs to the phosphatidylserine decarboxylase family. PSD-B subfamily. Prokaryotic type I sub-subfamily. As to quaternary structure, heterodimer of a large membrane-associated beta subunit and a small pyruvoyl-containing alpha subunit. Pyruvate serves as cofactor. Is synthesized initially as an inactive proenzyme. Formation of the active enzyme involves a self-maturation process in which the active site pyruvoyl group is generated from an internal serine residue via an autocatalytic post-translational modification. Two non-identical subunits are generated from the proenzyme in this reaction, and the pyruvate is formed at the N-terminus of the alpha chain, which is derived from the carboxyl end of the proenzyme. The autoendoproteolytic cleavage occurs by a canonical serine protease mechanism, in which the side chain hydroxyl group of the serine supplies its oxygen atom to form the C-terminus of the beta chain, while the remainder of the serine residue undergoes an oxidative deamination to produce ammonia and the pyruvoyl prosthetic group on the alpha chain. During this reaction, the Ser that is part of the protease active site of the proenzyme becomes the pyruvoyl prosthetic group, which constitutes an essential element of the active site of the mature decarboxylase.

The protein resides in the cell membrane. The enzyme catalyses a 1,2-diacyl-sn-glycero-3-phospho-L-serine + H(+) = a 1,2-diacyl-sn-glycero-3-phosphoethanolamine + CO2. Its pathway is phospholipid metabolism; phosphatidylethanolamine biosynthesis; phosphatidylethanolamine from CDP-diacylglycerol: step 2/2. In terms of biological role, catalyzes the formation of phosphatidylethanolamine (PtdEtn) from phosphatidylserine (PtdSer). This chain is Phosphatidylserine decarboxylase proenzyme, found in Francisella philomiragia subsp. philomiragia (strain ATCC 25017 / CCUG 19701 / FSC 153 / O#319-036).